Consider the following 282-residue polypeptide: Bifunctional protein FolD (282 aa).

Residues 166–168 (GAS) and I232 each bind NADP(+).

The protein belongs to the tetrahydrofolate dehydrogenase/cyclohydrolase family. As to quaternary structure, homodimer.

It catalyses the reaction (6R)-5,10-methylene-5,6,7,8-tetrahydrofolate + NADP(+) = (6R)-5,10-methenyltetrahydrofolate + NADPH. The catalysed reaction is (6R)-5,10-methenyltetrahydrofolate + H2O = (6R)-10-formyltetrahydrofolate + H(+). It functions in the pathway one-carbon metabolism; tetrahydrofolate interconversion. In terms of biological role, catalyzes the oxidation of 5,10-methylenetetrahydrofolate to 5,10-methenyltetrahydrofolate and then the hydrolysis of 5,10-methenyltetrahydrofolate to 10-formyltetrahydrofolate. This Haemophilus influenzae (strain PittGG) protein is Bifunctional protein FolD.